A 2797-amino-acid polypeptide reads, in one-letter code: Nonribosomal peptide synthetase penN (2797 aa).

The adenylation 1 stretch occupies residues 239–625; it reads SRPDHPAICA…ARKDSQVKIR (387 aa). Positions 751–824 constitute a Carrier 1 domain; the sequence is TDTERHVHRF…DIVSLVRTAT (74 aa). Residue serine 785 is modified to O-(pantetheine 4'-phosphoryl)serine. The tract at residues 830–856 is disordered; it reads PSAGAEISRSDAPTESPATGSFEGSGY. Residues 870-1299 are condensation 1; it reads QSFSQARMWF…DIEIGSLLLT (430 aa). The segment at 1328–1731 is adenylation 2; sequence FHQQVAAHGD…GRMDQQVKIR (404 aa). The methyltransferase stretch occupies residues 1857–1953; it reads LEIGTGTGMI…VIKQLIQLHD (97 aa). Residues 2277 to 2351 form the Carrier 2 domain; sequence SFTDDIERAM…RLAGRVRGFR (75 aa). O-(pantetheine 4'-phosphoryl)serine is present on serine 2311. Residues 2516 to 2658 are condensation 2; that stretch reads YDGISLSSIL…VNRTLIRVQL (143 aa).

Belongs to the NRP synthetase family.

The enzyme catalyses O-methyl-L-tyrosine + anthranilate + S-adenosyl-L-methionine + 2 ATP = (-)-4'-methoxycyclopeptine + 2 AMP + S-adenosyl-L-homocysteine + 2 diphosphate + 2 H(+). The catalysed reaction is anthranilate + L-phenylalanine + S-adenosyl-L-methionine + 2 ATP = cyclopeptine + 2 AMP + S-adenosyl-L-homocysteine + 2 diphosphate + 2 H(+). It functions in the pathway secondary metabolite biosynthesis. The protein operates within alkaloid biosynthesis. It participates in mycotoxin biosynthesis. Nonribosomal peptide synthetase; part of the gene cluster that mediates the biosynthesis of penigequinolones, potent insecticidal alkaloids that contain a highly modified 10-carbon prenyl group. The first stage is catalyzed by the nonribosomal peptide synthetase penN that condenses anthranilic acid and O-methyl-L-tyrosine to produce 4'-methoxycyclopeptin. 4'-methoxycyclopeptin is then converted to 4'-methoxydehydrocyclopeptin by the ketoglutarate-dependent dioxygenase penM through dehydrogenation to form a double bond between C-alpha and C-beta of the O-methyltyrosine side chain. PenM also converts its first product methoxydehydrocyclopeptin to 4'-methoxycyclopenin. The following conversion of 4'methoxycyclopenin into 4'-methoxyviridicatin is catalyzed by the cyclopenase penL. 4'-methoxyviridicatin is the precursor of quinolone natural products, and is further converted to quinolinone B. The prenyltransferase penI then catalyzes the canonical Friedel-Crafts alkylation of quinolinone B with dimethylallyl cation to yield dimethylallyl quinolone, which is subjected to FAD-dependent dehydrogenation by the FAD-linked oxidoreductase penH to yield conjugated aryl diene. The delta(3') double bond then serves as the site of the second alkylation with DMAPP catalyzed by the prenyltransferase penG to yield a carbenium ion intermediate, which can be attacked by H(2)O to yield a styrenyl quinolone containing a C3'-hydroxyprenyl chain, or undergo cyclization to yield yaequinolones J1 and J2. The conversion of the styrenyl quinolone into the tetrahydrofuran-containing yaequinolone C is performed by the FAD-dependent monooxygenase penE and involves epoxidation of the terminal C7'-C8' olefin, followed by epoxide ring opening initiated by the C3' hydroxyl group. The predicted cysteine hydrolase penJ acts as an epoxide hydrolase that enhances the rate of the 5-exo-tet cyclization step, increasing the yield of yaequinolone C. PenF catalyzes the cationic rearrangement of the epoxide formed by penE (before ring opening to produce yaequinolone C) into yaequinolone D. Finally, the short-chain dehydrogenase/reductase (SDR)-like reductase penD, catalyzes both the dehydration of yaequinolone D and the reduction of the resulting oxonium to yield penigequinolone. This chain is Nonribosomal peptide synthetase penN, found in Penicillium thymicola.